A 141-amino-acid polypeptide reads, in one-letter code: Hemoglobin subunit alpha-A/A' (141 aa).

Residues 1-141 (VLSANDKTNV…VGNVLTAKYR (141 aa)) enclose the Globin domain. His58 provides a ligand contact to O2. His87 contacts heme b.

It belongs to the globin family. As to quaternary structure, heterotetramer of two alpha chains and two beta chains. As to expression, red blood cells.

Functionally, involved in oxygen transport from the lung to the various peripheral tissues. The chain is Hemoglobin subunit alpha-A/A' (HBAA) from Gyps rueppelli (Rueppell's griffon).